Here is a 122-residue protein sequence, read N- to C-terminus: Biogenesis of lysosome-related organelles complex 1 subunit BLS1 (122 aa).

Serine 33 bears the Phosphoserine mark.

This sequence belongs to the BLOC1S1 family. In terms of assembly, component of the biogenesis of lysosome-related organelles complex-1 (BLOC-1) composed of at least BLI1, BLS1, CNL1, KXD1, SNN1 and VAB2.

The protein resides in the endosome. In terms of biological role, component of the biogenesis of lysosome-related organelles complex-1 (BLOC-1), a complex involved in endosomal cargo sorting. This chain is Biogenesis of lysosome-related organelles complex 1 subunit BLS1 (BLS1), found in Saccharomyces cerevisiae (strain YJM789) (Baker's yeast).